We begin with the raw amino-acid sequence, 556 residues long: Oxygen-dependent choline dehydrogenase (556 aa).

4-33 (DYIIIGAGSAGNVLATRLTEDPNTSVLLLE) contacts FAD. Histidine 473 (proton acceptor) is an active-site residue.

It belongs to the GMC oxidoreductase family. Requires FAD as cofactor.

The enzyme catalyses choline + A = betaine aldehyde + AH2. The catalysed reaction is betaine aldehyde + NAD(+) + H2O = glycine betaine + NADH + 2 H(+). Its pathway is amine and polyamine biosynthesis; betaine biosynthesis via choline pathway; betaine aldehyde from choline (cytochrome c reductase route): step 1/1. Involved in the biosynthesis of the osmoprotectant glycine betaine. Catalyzes the oxidation of choline to betaine aldehyde and betaine aldehyde to glycine betaine at the same rate. In Escherichia coli O139:H28 (strain E24377A / ETEC), this protein is Oxygen-dependent choline dehydrogenase.